A 95-amino-acid chain; its full sequence is MKDPRDVLKRPIITERSADLMTEKKYTFEVDVRANKTEVKDAVEEIFGVKVEKVNVQNYKGKSKRVGRYTGMTSRRRKAIVKLTADSKEIEIFEA.

It belongs to the universal ribosomal protein uL23 family. In terms of assembly, part of the 50S ribosomal subunit. Contacts protein L29, and trigger factor when it is bound to the ribosome.

One of the early assembly proteins it binds 23S rRNA. One of the proteins that surrounds the polypeptide exit tunnel on the outside of the ribosome. Forms the main docking site for trigger factor binding to the ribosome. The sequence is that of Large ribosomal subunit protein uL23 from Bacillus pumilus (strain SAFR-032).